Consider the following 198-residue polypeptide: MPQLVLASTSSYRRALLEKLQLPFITDAPETDETPHAGESTEALVQRLASAKAQALAGRYPQHLIIGSDQVCVIDGKITGKPLQYSTAVKQLQQASGQCVTFYTGLTLLNTANNSINCTCETFDVYFRTLSQAEIDGYLLREQPWNCAGSFKSEGLGITLFERLAGRDPNTLIGLPLIALTQMLIEQGVNPLTVKPVE.

Residue Asp-69 is the Proton acceptor of the active site.

This sequence belongs to the Maf family. YceF subfamily. The cofactor is a divalent metal cation.

The protein resides in the cytoplasm. The catalysed reaction is N(7)-methyl-GTP + H2O = N(7)-methyl-GMP + diphosphate + H(+). Its function is as follows. Nucleoside triphosphate pyrophosphatase that hydrolyzes 7-methyl-GTP (m(7)GTP). May have a dual role in cell division arrest and in preventing the incorporation of modified nucleotides into cellular nucleic acids. This chain is 7-methyl-GTP pyrophosphatase, found in Yersinia pestis bv. Antiqua (strain Antiqua).